The primary structure comprises 313 residues: Protein PHOSPHATE-INDUCED 1 (313 aa).

Positions 1-22 are cleaved as a signal peptide; that stretch reads MATSHFILKLFLVISFCNVCFA. The N-linked (GlcNAc...) asparagine glycan is linked to asparagine 119.

The protein belongs to the EXORDIUM family.

Its subcellular location is the secreted. It is found in the extracellular space. The protein localises to the apoplast. Functionally, may be involved in the regulation of cell division. In Nicotiana tabacum (Common tobacco), this protein is Protein PHOSPHATE-INDUCED 1.